Here is a 183-residue protein sequence, read N- to C-terminus: Capsid protein (183 aa).

A disordered region spans residues 136 to 183 (NAPILSTLPETTVVRRRGRSPRRRTPSPRRRRSQSPRRRRSQSRESQC). A compositionally biased stretch (basic residues) spans 149–176 (VRRRGRSPRRRTPSPRRRRSQSPRRRRS). A phosphoserine; by host mark is found at S155, S162, and S170. The stretch at 155-161 (SPRRRTP) is one 1; half-length repeat. The segment at 155–177 (SPRRRTPSPRRRRSQSPRRRRSQ) is 3 X 8 AA repeats of S-P-R-R-R-[PR]-S-Q. Residues 158–175 (RRTPSPRRRRSQSPRRRR) carry the Bipartite nuclear localization signal motif. 2 consecutive repeat copies span residues 162–169 (SPRRRRSQ) and 170–177 (SPRRRRSQ). Residues 177-183 (QSRESQC) are RNA binding.

The protein belongs to the orthohepadnavirus core antigen family. As to quaternary structure, homodimerizes, then multimerizes. Interacts with cytosol exposed regions of viral L glycoprotein present in the reticulum-to-Golgi compartment. Interacts with human FLNB. Phosphorylated form interacts with host importin alpha; this interaction depends on the exposure of the NLS, which itself depends upon genome maturation and/or phosphorylation of the capsid protein. Interacts with host NUP153. Post-translationally, phosphorylated by host SRPK1, SRPK2, and maybe protein kinase C or GAPDH. Phosphorylation is critical for pregenomic RNA packaging. Protein kinase C phosphorylation is stimulated by HBx protein and may play a role in transport of the viral genome to the nucleus at the late step during the viral replication cycle.

The protein localises to the virion. It is found in the host cytoplasm. Its function is as follows. Self assembles to form an icosahedral capsid. Most capsids appear to be large particles with an icosahedral symmetry of T=4 and consist of 240 copies of capsid protein, though a fraction forms smaller T=3 particles consisting of 180 capsid proteins. Entering capsids are transported along microtubules to the nucleus. Phosphorylation of the capsid is thought to induce exposure of nuclear localization signal in the C-terminal portion of the capsid protein that allows binding to the nuclear pore complex via the importin (karyopherin-) alpha and beta. Capsids are imported in intact form through the nuclear pore into the nuclear basket, where it probably binds NUP153. Only capsids that contain the mature viral genome can release the viral DNA and capsid protein into the nucleoplasm. Immature capsids get stuck in the basket. Capsids encapsulate the pre-genomic RNA and the P protein. Pre-genomic RNA is reverse-transcribed into DNA while the capsid is still in the cytoplasm. The capsid can then either be directed to the nucleus, providing more genomes for transcription, or bud through the endoplasmic reticulum to provide new virions. The polypeptide is Capsid protein (Hepatitis B virus genotype D subtype ayw (isolate Italy/CI/1992) (HBV-D)).